We begin with the raw amino-acid sequence, 222 residues long: 3-dehydroquinate dehydratase (222 aa).

3-dehydroquinate is bound by residues 29–31 (ELR) and Arg-55. Residue His-112 is the Proton donor/acceptor of the active site. The Schiff-base intermediate with substrate role is filled by Lys-139. Residues Arg-178, Ser-199, and Gln-203 each contribute to the 3-dehydroquinate site.

Belongs to the type-I 3-dehydroquinase family. In terms of assembly, homodimer.

It catalyses the reaction 3-dehydroquinate = 3-dehydroshikimate + H2O. Its pathway is metabolic intermediate biosynthesis; chorismate biosynthesis; chorismate from D-erythrose 4-phosphate and phosphoenolpyruvate: step 3/7. In terms of biological role, involved in the third step of the chorismate pathway, which leads to the biosynthesis of aromatic amino acids. Catalyzes the cis-dehydration of 3-dehydroquinate (DHQ) and introduces the first double bond of the aromatic ring to yield 3-dehydroshikimate. This chain is 3-dehydroquinate dehydratase, found in Dehalococcoides mccartyi (strain ATCC BAA-2100 / JCM 16839 / KCTC 5957 / BAV1).